The following is a 247-amino-acid chain: ATP synthase subunit a, chloroplastic (247 aa).

The next 5 membrane-spanning stretches (helical) occupy residues 38–58, 95–115, 134–154, 199–219, and 220–240; these read QVLI…ILVV, VPFI…GALL, INTT…AGIS, LVVV…VMFL, and GLFT…AYIG.

This sequence belongs to the ATPase A chain family. As to quaternary structure, F-type ATPases have 2 components, CF(1) - the catalytic core - and CF(0) - the membrane proton channel. CF(1) has five subunits: alpha(3), beta(3), gamma(1), delta(1), epsilon(1). CF(0) has four main subunits: a, b, b' and c.

It is found in the plastid. It localises to the chloroplast thylakoid membrane. Key component of the proton channel; it plays a direct role in the translocation of protons across the membrane. In Lotus japonicus (Lotus corniculatus var. japonicus), this protein is ATP synthase subunit a, chloroplastic.